Reading from the N-terminus, the 342-residue chain is Anthranilate phosphoribosyltransferase (342 aa).

Residues G74, 77–78, T82, 84–87, 101–109, and S113 each bind 5-phospho-alpha-D-ribose 1-diphosphate; these read GD, NVST, and KHGNRSVSG. G74 serves as a coordination point for anthranilate. S86 contacts Mg(2+). Residue N104 participates in anthranilate binding. R159 is a binding site for anthranilate. D218 and E219 together coordinate Mg(2+).

Belongs to the anthranilate phosphoribosyltransferase family. In terms of assembly, homodimer. It depends on Mg(2+) as a cofactor.

It catalyses the reaction N-(5-phospho-beta-D-ribosyl)anthranilate + diphosphate = 5-phospho-alpha-D-ribose 1-diphosphate + anthranilate. It participates in amino-acid biosynthesis; L-tryptophan biosynthesis; L-tryptophan from chorismate: step 2/5. Its function is as follows. Catalyzes the transfer of the phosphoribosyl group of 5-phosphorylribose-1-pyrophosphate (PRPP) to anthranilate to yield N-(5'-phosphoribosyl)-anthranilate (PRA). The sequence is that of Anthranilate phosphoribosyltransferase from Sulfolobus acidocaldarius (strain ATCC 33909 / DSM 639 / JCM 8929 / NBRC 15157 / NCIMB 11770).